Reading from the N-terminus, the 383-residue chain is tRNA(Met) cytidine acetate ligase (383 aa).

Residues 7–20 (ITEY…HRYH), Gly101, Asn150, and Arg175 each bind ATP.

Belongs to the TmcAL family.

It localises to the cytoplasm. The enzyme catalyses cytidine(34) in elongator tRNA(Met) + acetate + ATP = N(4)-acetylcytidine(34) in elongator tRNA(Met) + AMP + diphosphate. Catalyzes the formation of N(4)-acetylcytidine (ac(4)C) at the wobble position of elongator tRNA(Met), using acetate and ATP as substrates. First activates an acetate ion to form acetyladenylate (Ac-AMP) and then transfers the acetyl group to tRNA to form ac(4)C34. The polypeptide is tRNA(Met) cytidine acetate ligase (Lactiplantibacillus plantarum (strain ATCC BAA-793 / NCIMB 8826 / WCFS1) (Lactobacillus plantarum)).